Here is an 89-residue protein sequence, read N- to C-terminus: Elongation factor 1-beta (89 aa).

The protein belongs to the EF-1-beta/EF-1-delta family.

Its function is as follows. Promotes the exchange of GDP for GTP in EF-1-alpha/GDP, thus allowing the regeneration of EF-1-alpha/GTP that could then be used to form the ternary complex EF-1-alpha/GTP/AAtRNA. In Methanococcoides burtonii (strain DSM 6242 / NBRC 107633 / OCM 468 / ACE-M), this protein is Elongation factor 1-beta.